The sequence spans 190 residues: Bifunctional protein PyrR (190 aa).

A PRPP-binding motif is present at residues 107–119; the sequence is IILVDDVLYSGRT.

This sequence belongs to the purine/pyrimidine phosphoribosyltransferase family. PyrR subfamily.

It carries out the reaction UMP + diphosphate = 5-phospho-alpha-D-ribose 1-diphosphate + uracil. Regulates the transcription of the pyrimidine nucleotide (pyr) operon in response to exogenous pyrimidines. Its function is as follows. Also displays a weak uracil phosphoribosyltransferase activity which is not physiologically significant. The protein is Bifunctional protein PyrR of Corynebacterium diphtheriae (strain ATCC 700971 / NCTC 13129 / Biotype gravis).